The following is a 334-amino-acid chain: GTP 3',8-cyclase (334 aa).

The Radical SAM core domain maps to 13–239 (RFQRKFYYLR…KARADNDGPA (227 aa)). Residue Arg-22 participates in GTP binding. Residues Cys-29 and Cys-33 each coordinate [4Fe-4S] cluster. Tyr-35 serves as a coordination point for S-adenosyl-L-methionine. Cys-36 is a binding site for [4Fe-4S] cluster. Arg-73 is a binding site for GTP. Residue Gly-77 participates in S-adenosyl-L-methionine binding. Thr-104 lines the GTP pocket. An S-adenosyl-L-methionine-binding site is contributed by Ser-128. Lys-165 contacts GTP. Met-199 is an S-adenosyl-L-methionine binding site. [4Fe-4S] cluster-binding residues include Cys-262 and Cys-265. Position 267–269 (267–269 (RLR)) interacts with GTP. Cys-279 is a [4Fe-4S] cluster binding site.

This sequence belongs to the radical SAM superfamily. MoaA family. In terms of assembly, monomer and homodimer. The cofactor is [4Fe-4S] cluster.

The catalysed reaction is GTP + AH2 + S-adenosyl-L-methionine = (8S)-3',8-cyclo-7,8-dihydroguanosine 5'-triphosphate + 5'-deoxyadenosine + L-methionine + A + H(+). It functions in the pathway cofactor biosynthesis; molybdopterin biosynthesis. Its function is as follows. Catalyzes the cyclization of GTP to (8S)-3',8-cyclo-7,8-dihydroguanosine 5'-triphosphate. This chain is GTP 3',8-cyclase, found in Vibrio cholerae serotype O1 (strain M66-2).